Here is a 132-residue protein sequence, read N- to C-terminus: Agouti-signaling protein (132 aa).

The first 22 residues, M1 to S22, serve as a signal peptide directing secretion. A glycan (N-linked (GlcNAc...) asparagine) is linked at N39. The disordered stretch occupies residues K57–P88. Positions S63–M79 are enriched in basic and acidic residues. 5 disulfides stabilise this stretch: C93-C108, C100-C114, C107-C125, C111-C132, and C116-C123. Positions C93 to C132 constitute an Agouti domain.

The protein resides in the secreted. In terms of biological role, involved in the regulation of melanogenesis. The binding of ASP to MC1R precludes alpha-MSH initiated signaling and thus blocks production of cAMP, leading to a down-regulation of eumelanogenesis (brown/black pigment) and thus increasing synthesis of pheomelanin (yellow/red pigment). The chain is Agouti-signaling protein (ASIP) from Macaca assamensis (Assam macaque).